Here is a 453-residue protein sequence, read N- to C-terminus: Adenylyltransferase and sulfurtransferase MOCS3 (453 aa).

Phosphothreonine is present on Thr62. Residues Gly101, Asp122, 129–133 (SNFHR), Lys146, and 190–191 (DN) contribute to the ATP site. Cys231 and Cys234 together coordinate Zn(2+). Cys248 functions as the Glycyl thioester intermediate; for adenylyltransferase activity in the catalytic mechanism. Positions 306 and 309 each coordinate Zn(2+). Residues 355–451 (QAKPHLLIDV…WTSNIDPNFP (97 aa)) enclose the Rhodanese domain. The Cysteine persulfide intermediate; for sulfurtransferase activity role is filled by Cys410.

It in the N-terminal section; belongs to the HesA/MoeB/ThiF family. UBA4 subfamily. It depends on Zn(2+) as a cofactor.

The protein resides in the cytoplasm. Its subcellular location is the cytosol. The enzyme catalyses [molybdopterin-synthase sulfur-carrier protein]-C-terminal Gly-Gly + ATP + H(+) = [molybdopterin-synthase sulfur-carrier protein]-C-terminal Gly-Gly-AMP + diphosphate. It carries out the reaction [molybdopterin-synthase sulfur-carrier protein]-C-terminal Gly-Gly-AMP + S-sulfanyl-L-cysteinyl-[cysteine desulfurase] + AH2 = [molybdopterin-synthase sulfur-carrier protein]-C-terminal-Gly-aminoethanethioate + L-cysteinyl-[cysteine desulfurase] + A + AMP + 2 H(+). It participates in tRNA modification; 5-methoxycarbonylmethyl-2-thiouridine-tRNA biosynthesis. Its pathway is cofactor biosynthesis; molybdopterin biosynthesis. Its function is as follows. Plays a central role in 2-thiolation of mcm(5)S(2)U at tRNA wobble positions of cytosolic tRNA(Lys), tRNA(Glu) and tRNA(Gln). Also essential during biosynthesis of the molybdenum cofactor. Acts by mediating the C-terminal thiocarboxylation of sulfur carriers URM1 and MOCS2A. Its N-terminus first activates URM1 and MOCS2A as acyl-adenylates (-COAMP), then the persulfide sulfur on the catalytic cysteine is transferred to URM1 and MOCS2A to form thiocarboxylation (-COSH) of their C-terminus. The reaction probably involves hydrogen sulfide that is generated from the persulfide intermediate and that acts as a nucleophile towards URM1 and MOCS2A. Subsequently, a transient disulfide bond is formed. Does not use thiosulfate as sulfur donor; NFS1 probably acting as a sulfur donor for thiocarboxylation reactions. This chain is Adenylyltransferase and sulfurtransferase MOCS3, found in Drosophila sechellia (Fruit fly).